A 123-amino-acid chain; its full sequence is Large ribosomal subunit protein bL12 (123 aa).

The protein belongs to the bacterial ribosomal protein bL12 family. In terms of assembly, homodimer. Part of the ribosomal stalk of the 50S ribosomal subunit. Forms a multimeric L10(L12)X complex, where L10 forms an elongated spine to which 2 to 4 L12 dimers bind in a sequential fashion. Binds GTP-bound translation factors.

Its function is as follows. Forms part of the ribosomal stalk which helps the ribosome interact with GTP-bound translation factors. Is thus essential for accurate translation. The chain is Large ribosomal subunit protein bL12 from Chlorobium luteolum (strain DSM 273 / BCRC 81028 / 2530) (Pelodictyon luteolum).